Reading from the N-terminus, the 335-residue chain is Nucleoid-associated protein PSEEN4449 (335 aa).

Belongs to the YejK family.

The protein resides in the cytoplasm. It is found in the nucleoid. This chain is Nucleoid-associated protein PSEEN4449, found in Pseudomonas entomophila (strain L48).